The sequence spans 475 residues: ATP synthase subunit beta (475 aa).

161 to 168 (GGAGVGKT) contributes to the ATP binding site.

It belongs to the ATPase alpha/beta chains family. F-type ATPases have 2 components, CF(1) - the catalytic core - and CF(0) - the membrane proton channel. CF(1) has five subunits: alpha(3), beta(3), gamma(1), delta(1), epsilon(1). CF(0) has three main subunits: a(1), b(2) and c(9-12). The alpha and beta chains form an alternating ring which encloses part of the gamma chain. CF(1) is attached to CF(0) by a central stalk formed by the gamma and epsilon chains, while a peripheral stalk is formed by the delta and b chains.

The protein localises to the cell membrane. The catalysed reaction is ATP + H2O + 4 H(+)(in) = ADP + phosphate + 5 H(+)(out). Functionally, produces ATP from ADP in the presence of a proton gradient across the membrane. The catalytic sites are hosted primarily by the beta subunits. This Mycoplasma mycoides subsp. mycoides SC (strain CCUG 32753 / NCTC 10114 / PG1) protein is ATP synthase subunit beta.